The primary structure comprises 393 residues: Chalcone synthase 2 (393 aa).

Cysteine 166 is a catalytic residue.

Belongs to the thiolase-like superfamily. Chalcone/stilbene synthases family.

The enzyme catalyses (E)-4-coumaroyl-CoA + 3 malonyl-CoA + 3 H(+) = 2',4,4',6'-tetrahydroxychalcone + 3 CO2 + 4 CoA. Its pathway is secondary metabolite biosynthesis; flavonoid biosynthesis. Its function is as follows. The primary product of this enzyme is 4,2',4',6'-tetrahydroxychalcone (also termed naringenin-chalcone or chalcone) which can under specific conditions spontaneously isomerize into naringenin. The chain is Chalcone synthase 2 (CHS2) from Ruta graveolens (Common rue).